The following is a 178-amino-acid chain: Large ribosomal subunit protein uL10 (178 aa).

It belongs to the universal ribosomal protein uL10 family. In terms of assembly, part of the ribosomal stalk of the 50S ribosomal subunit. The N-terminus interacts with L11 and the large rRNA to form the base of the stalk. The C-terminus forms an elongated spine to which L12 dimers bind in a sequential fashion forming a multimeric L10(L12)X complex.

Functionally, forms part of the ribosomal stalk, playing a central role in the interaction of the ribosome with GTP-bound translation factors. The protein is Large ribosomal subunit protein uL10 of Salinibacter ruber (strain DSM 13855 / M31).